The sequence spans 160 residues: Phosphopantetheine adenylyltransferase (160 aa).

Residue Thr10 participates in substrate binding. Residues Thr10–Phe11 and His18 each bind ATP. The substrate site is built by Lys42, Leu74, and Arg88. ATP-binding positions include Gly89–Arg91, Glu99, and Asn124–Thr130.

The protein belongs to the bacterial CoaD family. Homohexamer. Requires Mg(2+) as cofactor.

The protein localises to the cytoplasm. The catalysed reaction is (R)-4'-phosphopantetheine + ATP + H(+) = 3'-dephospho-CoA + diphosphate. It participates in cofactor biosynthesis; coenzyme A biosynthesis; CoA from (R)-pantothenate: step 4/5. In terms of biological role, reversibly transfers an adenylyl group from ATP to 4'-phosphopantetheine, yielding dephospho-CoA (dPCoA) and pyrophosphate. The chain is Phosphopantetheine adenylyltransferase from Pseudoalteromonas atlantica (strain T6c / ATCC BAA-1087).